Reading from the N-terminus, the 319-residue chain is Dehydrogenase/reductase SDR family member 9 (319 aa).

Residues 1–20 (MLFWLLALLFLCAFLWNYKG) form the signal peptide. NAD(+)-binding positions include 34–58 (ITGC…RVIA) and D83. S164 provides a ligand contact to substrate. Y176 functions as the Proton acceptor in the catalytic mechanism. K180 lines the NAD(+) pocket.

It belongs to the short-chain dehydrogenases/reductases (SDR) family. Homotetramer.

It is found in the microsome membrane. Its subcellular location is the endoplasmic reticulum membrane. It carries out the reaction 3beta-hydroxy-5alpha-pregnane-20-one + NAD(+) = 5alpha-pregnane-3,20-dione + NADH + H(+). It catalyses the reaction 17beta-hydroxy-5alpha-androstan-3-one + NAD(+) = 5alpha-androstan-3,17-dione + NADH + H(+). The enzyme catalyses androsterone + NAD(+) = 5alpha-androstan-3,17-dione + NADH + H(+). The catalysed reaction is 5alpha-androstane-3alpha,17beta-diol + NAD(+) = 17beta-hydroxy-5alpha-androstan-3-one + NADH + H(+). It carries out the reaction all-trans-retinol + NAD(+) = all-trans-retinal + NADH + H(+). It catalyses the reaction 3alpha-hydroxy-5alpha-pregnan-20-one + NAD(+) = 5alpha-pregnane-3,20-dione + NADH + H(+). 3-alpha-hydroxysteroid dehydrogenase that converts 3-alpha-tetrahydroprogesterone (allopregnanolone) to dihydroxyprogesterone and 3-alpha-androstanediol to dihydroxyprogesterone. Also plays a role in the biosynthesis of retinoic acid. Can utilize both NADH and NADPH. The sequence is that of Dehydrogenase/reductase SDR family member 9 (Dhrs9) from Mus musculus (Mouse).